The chain runs to 689 residues: Methionine--tRNA ligase (689 aa).

A 'HIGH' region motif is present at residues 15–25 (PYANGPIHLGH). 4 residues coordinate Zn(2+): C146, C149, C159, and C162. Residues 332–336 (KMSKS) carry the 'KMSKS' region motif. Residue K335 coordinates ATP. The 102-residue stretch at 588–689 (DFAKIDLRIA…EGAQPGMRVK (102 aa)) folds into the tRNA-binding domain.

This sequence belongs to the class-I aminoacyl-tRNA synthetase family. MetG type 1 subfamily. As to quaternary structure, homodimer. Requires Zn(2+) as cofactor.

The protein localises to the cytoplasm. It carries out the reaction tRNA(Met) + L-methionine + ATP = L-methionyl-tRNA(Met) + AMP + diphosphate. Its function is as follows. Is required not only for elongation of protein synthesis but also for the initiation of all mRNA translation through initiator tRNA(fMet) aminoacylation. The protein is Methionine--tRNA ligase of Shewanella baltica (strain OS223).